The sequence spans 1416 residues: DNA-directed RNA polymerase subunit beta' (1416 aa).

The Zn(2+) site is built by C71, C73, C86, and C89. D461, D463, and D465 together coordinate Mg(2+). C815, C889, C896, and C899 together coordinate Zn(2+).

Belongs to the RNA polymerase beta' chain family. As to quaternary structure, the RNAP catalytic core consists of 2 alpha, 1 beta, 1 beta' and 1 omega subunit. When a sigma factor is associated with the core the holoenzyme is formed, which can initiate transcription. It depends on Mg(2+) as a cofactor. Requires Zn(2+) as cofactor.

It carries out the reaction RNA(n) + a ribonucleoside 5'-triphosphate = RNA(n+1) + diphosphate. In terms of biological role, DNA-dependent RNA polymerase catalyzes the transcription of DNA into RNA using the four ribonucleoside triphosphates as substrates. This Haemophilus influenzae (strain PittEE) protein is DNA-directed RNA polymerase subunit beta'.